The primary structure comprises 1675 residues: MAQILPIRFQEHLQLQNLGINPANIGFSTLTMESDKFICIREKVGEQAQVVIIDMNDPSNPIRRPISADSAIMNPASKVIALKAGKTLQIFNIEMKSKMKAHTMTDDVTFWKWISLNTVALVTDNAVYHWSMEGESQPVKMFDRHSSLAGCQIINYRTDAKQKWLLLTGISAQQNRVVGAMQLYSVDRKVSQPIEGHAASFAQFKMEGNAEESTLFCFAVRGQAGGKLHIIEVGTPPTGNQPFPKKAVDVFFPPEAQNDFPVAMQISEKHDVVFLITKYGYIHLYDLETGTCIYMNRISGETIFVTAPHEATAGIIGVNRKGQVLSVCVEEENIIPYITNVLQNPDLALRMAVRNNLAGAEELFARKFNALFAQGNYSEAAKVAANAPKGILRTPDTIRRFQSVPAQPGQTSPLLQYFGILLDQGQLNKYESLELCRPVLQQGRKQLLEKWLKEDKLECSEELGDLVKSVDPTLALSVYLRANVPNKVIQCFAETGQVQKIVLYAKKVGYTPDWIFLLRNVMRISPDQGQQFAQMLVQDEEPLADITQIVDVFMEYNLIQQCTAFLLDALKNNRPSEGPLQTRLLEMNLMHAPQVADAILGNQMFTHYDRAHIAQLCEKAGLLQRALEHFTDLYDIKRAVVHTHLLNPEWLVNYFGSLSVEDSLECLRAMLSANIRQNLQICVQVASKYHEQLSTQSLIELFESFKSFEGLFYFLGSIVNFSQDPDVHFKYIQAACKTGQIKEVERICRESNCYDPERVKNFLKEAKLTDQLPLIIVCDRFDFVHDLVLYLYRNNLQKYIEIYVQKVNPSRLPVVIGGLLDVDCSEDVIKNLILVVRGQFSTDELVAEVEKRNRLKLLLPWLEARIHEGCEEPATHNALAKIYIDSNNNPERFLRENPYYDSRVVGKYCEKRDPHLACVAYERGQCDLELINVCNENSLFKSLSRYLVRRKDPELWGSVLLESNPYRRPLIDQVVQTALSETQDPEEVSVTVKAFMTADLPNELIELLEKIVLDNSVFSEHRNLQNLLILTAIKADRTRVMEYINRLDNYDAPDIANIAISNELFEEAFAIFRKFDVNTSAVQVLIEHIGNLDRAYEFAERCNEPAVWSQLAKAQLQKGMVKEAIDSYIKADDPSSYMEVVQAANASGNWEELVKYLQMARKKARESYVETELIFALAKTNRLAELEEFINGPNNAHIQQVGDRCYDEKMYDAAKLLYNNVSNFGRLASTLVHLGEYQAAVDGARKANSTRTWKEVCFACVDGKEFRLAQMCGLHIVVHADELEELINYYQDRGYFEELITMLEAALGLERAHMGMFTELAILYSKFKPQKMREHLELFWSRVNIPKVLRAAEQAHLWAELVFLYDKYEEYDNAIITMMNHPTDAWKEGQFKDIITKVANVELYYKAIQFYLEFKPLLLNDLLMVLSPRLDHTRAVNYFSKVKQLPLVKPYLRSVQNHNNKSVNESLNNLFITEEDYQALRTSIDAYDNFDNISLAQRLEKHELIEFRRIAAYLFKGNNRWKQSVELCKKDSLYKDAMQYASESKDTELAEELLQWFLQEEKRECFGACLFTCYDLLRPDVVLETAWRHNIMDFAMPYFIQVMKEYLTKVDKLDASESLRKEEEQATETQPIVYGQPQLMLTAGPSVAVPPQAPFGYGYTAPPYGQPQPGFGYSM.

Alanine 2 carries the post-translational modification N-acetylalanine. The segment at 2–479 is globular terminal domain; it reads AQILPIRFQE…VDPTLALSVY (478 aa). WD40-like repeat regions lie at residues 24–67, 68–107, 108–149, 150–195, 196–257, 258–301, and 302–330; these read NIGF…RPIS, ADSA…MTDD, VTFW…SSLA, GCQI…QPIE, GHAA…PEAQ, NDFP…ISGE, and TIFV…VCVE. At serine 67 the chain carries Phosphoserine. A Phosphothreonine modification is found at threonine 105. Tyrosine 184 carries the post-translational modification Phosphotyrosine. Position 394 is a phosphothreonine (threonine 394). The interval 449–465 is binding site for the uncoating ATPase, involved in lattice disassembly; it reads EKWLKEDKLECSEELGD. The tract at residues 480-523 is flexible linker; the sequence is LRANVPNKVIQCFAETGQVQKIVLYAKKVGYTPDWIFLLRNVMR. Positions 524–634 are distal segment; the sequence is ISPDQGQQFA…RALEHFTDLY (111 aa). The segment at 524-1675 is heavy chain arm; it reads ISPDQGQQFA…QPQPGFGYSM (1152 aa). CHCR repeat units lie at residues 537–683, 686–828, 833–972, 979–1124, 1128–1269, 1274–1420, and 1423–1566; these read VQDE…QICV, ASKY…SEDV, ILVV…PLID, LSET…VKEA, YIKA…FRLA, LHIV…LLLN, and LMVL…RECF. Residue tyrosine 634 is modified to Phosphotyrosine. Positions 639 to 1675 are proximal segment; sequence AVVHTHLLNP…QPQPGFGYSM (1037 aa). The residue at position 737 (lysine 737) is an N6-succinyllysine. N6-acetyllysine is present on lysine 856. Tyrosine 899 carries the post-translational modification Phosphotyrosine. Serine 1167 is subject to Phosphoserine. Residue tyrosine 1206 is modified to Phosphotyrosine. Positions 1213–1522 are involved in binding clathrin light chain; it reads AAKLLYNNVS…YLFKGNNRWK (310 aa). Position 1229 is a phosphoserine (serine 1229). The residue at position 1441 (lysine 1441) is an N6-acetyllysine; alternate. N6-succinyllysine; alternate is present on lysine 1441. 2 positions are modified to phosphotyrosine: tyrosine 1477 and tyrosine 1487. At serine 1494 the chain carries Phosphoserine. At lysine 1501 the chain carries N6-acetyllysine. Positions 1550 to 1675 are trimerization; sequence AEELLQWFLQ…QPQPGFGYSM (126 aa).

Belongs to the clathrin heavy chain family. Clathrin triskelions, composed of 3 heavy chains and 3 light chains, are the basic subunits of the clathrin coat. In the presence of light chains, hub assembly is influenced by both the pH and the concentration of calcium. Interacts with HIP1. Interacts with DENND1A, DENND1B and DENND1C. Interacts with ERBB2. Interacts with FKBP6. Interacts with OCRL. Interacts with CKAP5 and TACC3 forming the TACC3/ch-TOG/clathrin complex located at spindle inter-microtubules bridges; the complex implicates clathrin triskelions; TACC3 and CLTC are proposed to form a composite microtubule interaction surface. Plays a role in early autophagosome formation. Interacts with ATG16L1 (via N-terminus). Interacts with RFTN1; the interaction occurs in response to pathogens. Interacts with USP2 isoform 2. Interacts with TMEM106B (via N-terminus). Interacts with DNAJC6; this interaction produces a local change in heavy-chain contacts, creating a detectable global distortion of the clathrin coat and leads to the recruitment of HSPA8.

The protein resides in the cytoplasmic vesicle membrane. It localises to the membrane. Its subcellular location is the coated pit. It is found in the melanosome. The protein localises to the cytoplasm. The protein resides in the cytoskeleton. It localises to the spindle. Functionally, clathrin is the major protein of the polyhedral coat of coated pits and vesicles. Two different adapter protein complexes link the clathrin lattice either to the plasma membrane or to the trans-Golgi network. Acts as a component of the TACC3/ch-TOG/clathrin complex proposed to contribute to stabilization of kinetochore fibers of the mitotic spindle by acting as inter-microtubule bridge. The TACC3/ch-TOG/clathrin complex is required for the maintenance of kinetochore fiber tension. Plays a role in early autophagosome formation. Interaction with DNAJC6 mediates the recruitment of HSPA8 to the clathrin lattice and creates local destabilization of the lattice promoting uncoating. The sequence is that of Clathrin heavy chain 1 from Mus musculus (Mouse).